Reading from the N-terminus, the 338-residue chain is Anthranilate phosphoribosyltransferase (338 aa).

5-phospho-alpha-D-ribose 1-diphosphate contacts are provided by residues Gly-81, 84-85, Thr-89, 91-94, 109-117, and Ser-121; these read GD, NIST, and KHGNRAVSS. Residue Gly-81 coordinates anthranilate. Ser-93 provides a ligand contact to Mg(2+). Asn-112 lines the anthranilate pocket. Arg-167 contributes to the anthranilate binding site. The Mg(2+) site is built by Asp-226 and Glu-227.

The protein belongs to the anthranilate phosphoribosyltransferase family. As to quaternary structure, homodimer. Mg(2+) serves as cofactor.

The enzyme catalyses N-(5-phospho-beta-D-ribosyl)anthranilate + diphosphate = 5-phospho-alpha-D-ribose 1-diphosphate + anthranilate. Its pathway is amino-acid biosynthesis; L-tryptophan biosynthesis; L-tryptophan from chorismate: step 2/5. Its function is as follows. Catalyzes the transfer of the phosphoribosyl group of 5-phosphorylribose-1-pyrophosphate (PRPP) to anthranilate to yield N-(5'-phosphoribosyl)-anthranilate (PRA). This Myxococcus xanthus (strain DK1622) protein is Anthranilate phosphoribosyltransferase.